Here is a 434-residue protein sequence, read N- to C-terminus: Trigger factor (434 aa).

A PPIase FKBP-type domain is found at Gly-160–Pro-245.

Belongs to the FKBP-type PPIase family. Tig subfamily.

The protein resides in the cytoplasm. It catalyses the reaction [protein]-peptidylproline (omega=180) = [protein]-peptidylproline (omega=0). In terms of biological role, involved in protein export. Acts as a chaperone by maintaining the newly synthesized protein in an open conformation. Functions as a peptidyl-prolyl cis-trans isomerase. The sequence is that of Trigger factor from Shewanella baltica (strain OS185).